We begin with the raw amino-acid sequence, 96 residues long: Large ribosomal subunit protein uL23 (96 aa).

It belongs to the universal ribosomal protein uL23 family. Part of the 50S ribosomal subunit. Contacts protein L29, and trigger factor when it is bound to the ribosome.

In terms of biological role, one of the early assembly proteins it binds 23S rRNA. One of the proteins that surrounds the polypeptide exit tunnel on the outside of the ribosome. Forms the main docking site for trigger factor binding to the ribosome. This Oleidesulfovibrio alaskensis (strain ATCC BAA-1058 / DSM 17464 / G20) (Desulfovibrio alaskensis) protein is Large ribosomal subunit protein uL23.